A 342-amino-acid polypeptide reads, in one-letter code: Protease HtpX homolog (342 aa).

A run of 2 helical transmembrane segments spans residues 6-26 (TAMLLAFMTALFMGVGFLIGG) and 28-48 (GGMMIALVIAGAMNLFSYWNS). Position 130 (His130) interacts with Zn(2+). Residue Glu131 is part of the active site. His134 lines the Zn(2+) pocket. 2 helical membrane passes run 145–165 (ITATLAGAISMLGNFAFFFGG) and 173–193 (GGGIIGPLVAMIVAPFAAMLV). Glu202 contacts Zn(2+). Residues 290–342 (PQHSKPAASGPWGSSAERSTDDPWGVKGGASTRSVPKIGRRGKDNDAPKGPWN) are disordered.

This sequence belongs to the peptidase M48B family. The cofactor is Zn(2+).

The protein resides in the cell inner membrane. The protein is Protease HtpX homolog of Allorhizobium ampelinum (strain ATCC BAA-846 / DSM 112012 / S4) (Agrobacterium vitis (strain S4)).